Consider the following 354-residue polypeptide: Thiamine thiazole synthase 1, chloroplastic (354 aa).

The transit peptide at 1–43 directs the protein to the chloroplast; it reads MATTAASSLLKSSFAGSRLPSATRAPSSVVVSTGGAPRTAAIS. Substrate contacts are provided by residues alanine 96, 116–117, glycine 124, and valine 190; that span reads EQ. Cysteine 219 is modified (2,3-didehydroalanine (Cys)). Residues aspartate 221, histidine 236, methionine 288, and 298–300 each bind substrate; that span reads RMG.

This sequence belongs to the THI4 family. Homooctamer. Fe cation serves as cofactor. In terms of processing, during the catalytic reaction, a sulfide is transferred from Cys-219 to a reaction intermediate, generating a dehydroalanine residue.

The protein resides in the plastid. It is found in the chloroplast. The enzyme catalyses [ADP-thiazole synthase]-L-cysteine + glycine + NAD(+) = [ADP-thiazole synthase]-dehydroalanine + ADP-5-ethyl-4-methylthiazole-2-carboxylate + nicotinamide + 3 H2O + 2 H(+). Involved in biosynthesis of the thiamine precursor thiazole. Catalyzes the conversion of NAD and glycine to adenosine diphosphate 5-(2-hydroxyethyl)-4-methylthiazole-2-carboxylic acid (ADT), an adenylated thiazole intermediate. The reaction includes an iron-dependent sulfide transfer from a conserved cysteine residue of the protein to a thiazole intermediate. The enzyme can only undergo a single turnover, which suggests it is a suicide enzyme. May have additional roles in adaptation to various stress conditions and in DNA damage tolerance. In Sorghum bicolor (Sorghum), this protein is Thiamine thiazole synthase 1, chloroplastic.